A 485-amino-acid polypeptide reads, in one-letter code: Adenosylhomocysteinase (485 aa).

The substrate site is built by Thr64, Asp139, and Glu205. 206–208 is an NAD(+) binding site; it reads TTT. Lys235 and Asp239 together coordinate substrate. NAD(+) is bound by residues Asn240, 269 to 274, Glu292, Asn327, 348 to 350, and Asn397; these read GYGDVG and IGH.

Belongs to the adenosylhomocysteinase family. The cofactor is NAD(+).

It catalyses the reaction S-adenosyl-L-homocysteine + H2O = L-homocysteine + adenosine. The protein operates within amino-acid biosynthesis; L-homocysteine biosynthesis; L-homocysteine from S-adenosyl-L-homocysteine: step 1/1. In terms of biological role, adenosylhomocysteine is a competitive inhibitor of S-adenosyl-L-methionine-dependent methyl transferase reactions; therefore adenosylhomocysteinase may play a key role in the control of methylations via regulation of the intracellular concentration of adenosylhomocysteine. The sequence is that of Adenosylhomocysteinase (SAHH) from Medicago sativa (Alfalfa).